The chain runs to 690 residues: Eukaryotic translation initiation factor 3 subunit B (690 aa).

A compositionally biased stretch (basic and acidic residues) spans 1-11 (MAKKKSEEHSG). A disordered region spans residues 1 to 33 (MAKKKSEEHSGTDANDSDYQEEPNFDDPPGFVD). Acidic residues predominate over residues 15–25 (NDSDYQEEPNF). The region spanning 57–141 (SVVVVDNIPK…HTFAVNLFTD (85 aa)) is the RRM domain. WD repeat units lie at residues 207 to 246 (TRER…KIQK), 293 to 331 (DGMS…LLDL), 334 to 369 (IKIP…TLME), 442 to 484 (EIRE…KPSL), and 530 to 575 (PDHF…IKRT). The stretch at 595–645 (EEKQKEIKKNLKKYYAAFEQKDRLRLTRASKELLEKRSQLRETFMEYRNKR) forms a coiled coil.

Belongs to the eIF-3 subunit B family. As to quaternary structure, component of the eukaryotic translation initiation factor 3 (eIF-3) complex. The eIF-3 complex interacts with pix. Interacts with mxt.

The protein localises to the cytoplasm. RNA-binding component of the eukaryotic translation initiation factor 3 (eIF-3) complex, which is involved in protein synthesis of a specialized repertoire of mRNAs and, together with other initiation factors, stimulates binding of mRNA and methionyl-tRNAi to the 40S ribosome. The eIF-3 complex specifically targets and initiates translation of a subset of mRNAs involved in cell proliferation. This is Eukaryotic translation initiation factor 3 subunit B from Drosophila melanogaster (Fruit fly).